The following is a 239-amino-acid chain: Probable 2-phosphosulfolactate phosphatase (239 aa).

This sequence belongs to the ComB family. Requires Mg(2+) as cofactor.

It catalyses the reaction (2R)-O-phospho-3-sulfolactate + H2O = (2R)-3-sulfolactate + phosphate. The protein is Probable 2-phosphosulfolactate phosphatase of Clostridium botulinum (strain Loch Maree / Type A3).